We begin with the raw amino-acid sequence, 331 residues long: tRNA-modifying protein YgfZ (331 aa).

The folate site is built by tryptophan 28 and tryptophan 191.

The protein belongs to the tRNA-modifying YgfZ family.

It localises to the cytoplasm. In terms of biological role, folate-binding protein involved in regulating the level of ATP-DnaA and in the modification of some tRNAs. It is probably a key factor in regulatory networks that act via tRNA modification, such as initiation of chromosomal replication. This is tRNA-modifying protein YgfZ from Edwardsiella ictaluri (strain 93-146).